The following is a 66-amino-acid chain: Cold shock protein 2 (66 aa).

The CSD domain occupies 4–63; that stretch reads GTVKWFNADKGFGFITGEDGTDVFVHFSAIQTDGFKTLDEGQKVTYDEEQGDRGPQATNV.

It localises to the cytoplasm. The protein is Cold shock protein 2 (cspL) of Lactiplantibacillus plantarum (strain ATCC BAA-793 / NCIMB 8826 / WCFS1) (Lactobacillus plantarum).